A 322-amino-acid polypeptide reads, in one-letter code: Undecaprenyl-phosphate 4-deoxy-4-formamido-L-arabinose transferase (322 aa).

Over 1 to 235 (MFEIHPVKKV…TCLTTTPLRM (235 aa)) the chain is Cytoplasmic. Residues 236-256 (LSLLGSIIAIGGFSIAVLLVI) traverse the membrane as a helical segment. Residues 257–269 (LRLTFGPQWAAEG) are Periplasmic-facing. Residues 270–290 (VFMLFAVLFTFIGAQFIGMGL) traverse the membrane as a helical segment. Residues 291 to 322 (LGEYIGRIYTDVRARPRYFVQQVIRPSSKENE) lie on the Cytoplasmic side of the membrane.

The protein belongs to the glycosyltransferase 2 family.

It is found in the cell inner membrane. The enzyme catalyses UDP-4-deoxy-4-formamido-beta-L-arabinose + di-trans,octa-cis-undecaprenyl phosphate = 4-deoxy-4-formamido-alpha-L-arabinopyranosyl di-trans,octa-cis-undecaprenyl phosphate + UDP. It functions in the pathway glycolipid biosynthesis; 4-amino-4-deoxy-alpha-L-arabinose undecaprenyl phosphate biosynthesis; 4-amino-4-deoxy-alpha-L-arabinose undecaprenyl phosphate from UDP-4-deoxy-4-formamido-beta-L-arabinose and undecaprenyl phosphate: step 1/2. It participates in bacterial outer membrane biogenesis; lipopolysaccharide biosynthesis. In terms of biological role, catalyzes the transfer of 4-deoxy-4-formamido-L-arabinose from UDP to undecaprenyl phosphate. The modified arabinose is attached to lipid A and is required for resistance to polymyxin and cationic antimicrobial peptides. The protein is Undecaprenyl-phosphate 4-deoxy-4-formamido-L-arabinose transferase of Escherichia coli (strain SMS-3-5 / SECEC).